The sequence spans 514 residues: Variant surface glycoprotein ILTAT 1.24 (514 aa).

Residues 1–23 (MVYRNILQLSVLKVLLIVLIVEA) form the signal peptide. Intrachain disulfides connect C37–C162 and C143–C204. The N-linked (GlcNAc...) asparagine glycan is linked to N443. The segment at 451-476 (GVPVTQTQTAGADTTAEKCKGKGEKD) is disordered. A compositionally biased stretch (low complexity) spans 455-464 (TQTQTAGADT). Basic and acidic residues predominate over residues 465 to 476 (TAEKCKGKGEKD). D491 is lipidated: GPI-anchor amidated aspartate. The propeptide at 492-514 (SSILANKQFALSVASAAFVALLF) is removed in mature form.

It localises to the cell membrane. In terms of biological role, VSG forms a coat on the surface of the parasite. The trypanosome evades the immune response of the host by expressing a series of antigenically distinct VSGs from an estimated 1000 VSG genes. This chain is Variant surface glycoprotein ILTAT 1.24, found in Trypanosoma brucei brucei.